Consider the following 492-residue polypeptide: V-type proton ATPase subunit B 2 (492 aa).

The protein belongs to the ATPase alpha/beta chains family. In terms of assembly, V-ATPase is a heteromultimeric enzyme composed of a peripheral catalytic V1 complex (main components: subunits A, B, C, D, E, and F) attached to an integral membrane V0 proton pore complex (main component: the proteolipid protein).

Functionally, non-catalytic subunit of the peripheral V1 complex of vacuolar ATPase. V-ATPase is responsible for acidifying a variety of intracellular compartments in eukaryotic cells. The sequence is that of V-type proton ATPase subunit B 2 from Acetabularia acetabulum (Mermaid's wine glass).